The chain runs to 152 residues: Transcriptional regulator MraZ (152 aa).

2 SpoVT-AbrB domains span residues 5 to 52 (ASSL…PLAQ) and 81 to 124 (ATEY…DEAR).

This sequence belongs to the MraZ family. Forms oligomers.

Its subcellular location is the cytoplasm. The protein localises to the nucleoid. This chain is Transcriptional regulator MraZ, found in Pseudoalteromonas translucida (strain TAC 125).